We begin with the raw amino-acid sequence, 290 residues long: MNSGPGKKPDWLKIKLASGSSFASTRKLLNRHSLHTVCRSAMCPNLHECWSKGTATFLLLGNVCTRSCRFCAVGTECRPAMPDPEEPSKIAEAVKTMKLRHAVLTSVNRDDLADGGATHWVETIRAIREVNPGVSLECLIPDFSGNEQSLDLVMQELPEVLNHNIETVPSRYAAVRPQALYERSLAVIERAKRQFRLATKSGMMVGMGETEEELEASLHDLRGHGCDMVTIGQYLQPTAAHLPVSRYVTPEEFERYREIALDAGFRHVQSGPFVRSSYHAEAFEPVEKIS.

The [4Fe-4S] cluster site is built by Cys-38, Cys-43, Cys-49, Cys-64, Cys-68, Cys-71, and Ser-277. In terms of domain architecture, Radical SAM core spans 50–266; the sequence is WSKGTATFLL…REIALDAGFR (217 aa).

Belongs to the radical SAM superfamily. Lipoyl synthase family. Requires [4Fe-4S] cluster as cofactor.

The protein resides in the cytoplasm. The enzyme catalyses [[Fe-S] cluster scaffold protein carrying a second [4Fe-4S](2+) cluster] + N(6)-octanoyl-L-lysyl-[protein] + 2 oxidized [2Fe-2S]-[ferredoxin] + 2 S-adenosyl-L-methionine + 4 H(+) = [[Fe-S] cluster scaffold protein] + N(6)-[(R)-dihydrolipoyl]-L-lysyl-[protein] + 4 Fe(3+) + 2 hydrogen sulfide + 2 5'-deoxyadenosine + 2 L-methionine + 2 reduced [2Fe-2S]-[ferredoxin]. It functions in the pathway protein modification; protein lipoylation via endogenous pathway; protein N(6)-(lipoyl)lysine from octanoyl-[acyl-carrier-protein]: step 2/2. Catalyzes the radical-mediated insertion of two sulfur atoms into the C-6 and C-8 positions of the octanoyl moiety bound to the lipoyl domains of lipoate-dependent enzymes, thereby converting the octanoylated domains into lipoylated derivatives. The chain is Lipoyl synthase from Chlorobaculum tepidum (strain ATCC 49652 / DSM 12025 / NBRC 103806 / TLS) (Chlorobium tepidum).